The primary structure comprises 398 residues: Acetyl-CoA acetyltransferase erg10B, cytosolic (398 aa).

Cys92 functions as the Acyl-thioester intermediate in the catalytic mechanism. Tyr187 contacts K(+). CoA is bound by residues Asn229 and Lys232. The K(+) site is built by Ala249, Pro250, and Ser252. Residue Ser253 participates in CoA binding. Val350 provides a ligand contact to K(+). Catalysis depends on proton acceptor residues His354 and Cys384. Residue Asn385 coordinates chloride.

Belongs to the thiolase-like superfamily. Thiolase family. As to quaternary structure, homotetramer. It depends on K(+) as a cofactor.

It is found in the cytoplasm. The protein resides in the cytosol. It catalyses the reaction 2 acetyl-CoA = acetoacetyl-CoA + CoA. The protein operates within metabolic intermediate biosynthesis; (R)-mevalonate biosynthesis; (R)-mevalonate from acetyl-CoA: step 1/3. Its activity is regulated as follows. Activity is increased by monovalent cations such as K(+), Rb(+) or Cs(+). Acetyl-CoA acetyltransferase; part of the first module of ergosterol biosynthesis pathway that includes the early steps of the pathway, conserved across all eukaryotes, and which results in the formation of mevalonate from acetyl-coenzyme A (acetyl-CoA). In this module, the cytosolic acetyl-CoA acetyltransferase erg10B catalyzes the formation of acetoacetyl-CoA. The hydroxymethylglutaryl-CoA synthases AFUA_8G07210 and AFUA_3G10660 then condense acetyl-CoA with acetoacetyl-CoA to form HMG-CoA. The rate-limiting step of the early module is the reduction to mevalonate by the 3-hydroxy-3-methylglutaryl-coenzyme A (HMG-CoA) reductases hmg1 and hmg2. Mevalonate is also a precursor for the extracellular siderophore triacetylfusarinine C (TAFC). This is Acetyl-CoA acetyltransferase erg10B, cytosolic from Aspergillus fumigatus (strain CBS 144.89 / FGSC A1163 / CEA10) (Neosartorya fumigata).